The sequence spans 153 residues: Deoxyuridine 5'-triphosphate nucleotidohydrolase (153 aa).

Substrate contacts are provided by residues 71–73 (RSG), Asn-84, 88–90 (TID), and Lys-98.

The protein belongs to the dUTPase family. Requires Mg(2+) as cofactor.

The enzyme catalyses dUTP + H2O = dUMP + diphosphate + H(+). Its pathway is pyrimidine metabolism; dUMP biosynthesis; dUMP from dCTP (dUTP route): step 2/2. This enzyme is involved in nucleotide metabolism: it produces dUMP, the immediate precursor of thymidine nucleotides and it decreases the intracellular concentration of dUTP so that uracil cannot be incorporated into DNA. This chain is Deoxyuridine 5'-triphosphate nucleotidohydrolase, found in Wolbachia pipientis wMel.